The primary structure comprises 840 residues: UPF0508 protein SCY_2952 (840 aa).

It belongs to the UPF0508 family.

The chain is UPF0508 protein SCY_2952 from Saccharomyces cerevisiae (strain YJM789) (Baker's yeast).